Reading from the N-terminus, the 438-residue chain is DNA primase DnaG (438 aa).

Positions 169–243 (DSIIVVEGRA…DIDYVARAPY (75 aa)) constitute a Toprim domain. Mg(2+) is bound by residues E175, D217, and D219.

The protein belongs to the archaeal DnaG primase family. Forms a ternary complex with MCM helicase and DNA. The cofactor is Mg(2+).

It catalyses the reaction ssDNA + n NTP = ssDNA/pppN(pN)n-1 hybrid + (n-1) diphosphate.. Functionally, RNA polymerase that catalyzes the synthesis of short RNA molecules used as primers for DNA polymerase during DNA replication. This is DNA primase DnaG from Methanococcus maripaludis (strain C5 / ATCC BAA-1333).